We begin with the raw amino-acid sequence, 173 residues long: MSGKELNKIVAAILFASLIAMMVGFIANILYKPVLEPKHRGYSIAVQEVSEAPTTQAQAPINIPELMKTANADNGREIAKKCLMCHSLDKDGPNKIGPHLWDVAGRPKASITDYKYSPALSALGGNWDDDSLFAFLHKPSSYAPGTKMSFAGISKPQDIADVILFLKTYVHDK.

Residues 1-8 (MSGKELNK) lie on the Cytoplasmic side of the membrane. The chain crosses the membrane as a helical; Signal-anchor span at residues 9–29 (IVAAILFASLIAMMVGFIANI). The Periplasmic segment spans residues 30–173 (LYKPVLEPKH…LFLKTYVHDK (144 aa)). The heme c site is built by Cys-82, Cys-85, His-86, and Met-148.

Belongs to the cytochrome c family. In terms of processing, binds 1 heme c group covalently per subunit.

It localises to the cell membrane. May be involved in electron transfer from bc1 complex to aa3. The polypeptide is Cytochrome c homolog (cycM) (Rickettsia bellii (strain RML369-C)).